The chain runs to 277 residues: Large ribosomal subunit protein uL2 (277 aa).

2 disordered regions span residues 32-58 (KSLTKGKKFKSGRDSSGRISIRRRGGG) and 225-277 (VAMN…RRNK). Over residues 258–277 (YKTRKKKRYSDKFIIKRRNK) the composition is skewed to basic residues.

The protein belongs to the universal ribosomal protein uL2 family. In terms of assembly, part of the 50S ribosomal subunit. Forms a bridge to the 30S subunit in the 70S ribosome.

In terms of biological role, one of the primary rRNA binding proteins. Required for association of the 30S and 50S subunits to form the 70S ribosome, for tRNA binding and peptide bond formation. It has been suggested to have peptidyltransferase activity; this is somewhat controversial. Makes several contacts with the 16S rRNA in the 70S ribosome. This Borreliella afzelii (strain PKo) (Borrelia afzelii) protein is Large ribosomal subunit protein uL2.